Consider the following 362-residue polypeptide: Cobalt-precorrin-5B C(1)-methyltransferase (362 aa).

Belongs to the CbiD family.

The catalysed reaction is Co-precorrin-5B + S-adenosyl-L-methionine = Co-precorrin-6A + S-adenosyl-L-homocysteine. It participates in cofactor biosynthesis; adenosylcobalamin biosynthesis; cob(II)yrinate a,c-diamide from sirohydrochlorin (anaerobic route): step 6/10. In terms of biological role, catalyzes the methylation of C-1 in cobalt-precorrin-5B to form cobalt-precorrin-6A. This is Cobalt-precorrin-5B C(1)-methyltransferase from Burkholderia vietnamiensis (strain G4 / LMG 22486) (Burkholderia cepacia (strain R1808)).